The chain runs to 414 residues: Histidine--tRNA ligase (414 aa).

The protein belongs to the class-II aminoacyl-tRNA synthetase family. In terms of assembly, homodimer.

It localises to the cytoplasm. It catalyses the reaction tRNA(His) + L-histidine + ATP = L-histidyl-tRNA(His) + AMP + diphosphate + H(+). In Mycoplasma capricolum subsp. capricolum (strain California kid / ATCC 27343 / NCTC 10154), this protein is Histidine--tRNA ligase.